Here is a 354-residue protein sequence, read N- to C-terminus: Probable N-acetylmuramoyl-L-alanine amidase (354 aa).

Residues 1 to 39 (MVKVINNFVKVNQYDRPGLKLAAVKGIVMHWTATPGASA) form the signal peptide. The N-acetylmuramoyl-L-alanine amidase domain maps to 40–152 (LNERNYFNGT…YDVTNKGCPT (113 aa)).

It belongs to the N-acetylmuramoyl-L-alanine amidase 2 family.

The protein resides in the secreted. It catalyses the reaction Hydrolyzes the link between N-acetylmuramoyl residues and L-amino acid residues in certain cell-wall glycopeptides.. In Bacillus licheniformis, this protein is Probable N-acetylmuramoyl-L-alanine amidase.